A 205-amino-acid polypeptide reads, in one-letter code: Suppressor of IKBKE 1 (205 aa).

Coiled coils occupy residues 4 to 32 (TIDK…LIDQ) and 154 to 192 (KAIQ…ESLR).

This sequence belongs to the SIKE family. Interacts with IKBKE and TBK1 via its coiled coil region. Interaction with TBK1 is disrupted upon viral infection or TLR3 stimulation. Interacts with CDC42BPB. Associates with the STRIPAK core complex composed of PP2A catalytic and scaffolding subunits, the striatins (PP2A regulatory subunits), the striatin-associated proteins MOB4, STRIP1 and STRIP2, PDCD10 and members of the STE20 kinases, such as STK24 and STK26.

It localises to the cytoplasm. Functionally, suppressor of IKK-epsilon. Associates with the striatin-interacting phosphatase and kinase (STRIPAK) core complex, forming the extended (SIKE1:SLMAP)STRIPAK complex. The (SIKE1:SLMAP)STRIPAK complex dephosphorylates STK3 leading to the inhibition of Hippo signaling and the control of cell growth. In Xenopus laevis (African clawed frog), this protein is Suppressor of IKBKE 1 (sike1).